Reading from the N-terminus, the 254-residue chain is Glutamate racemase (254 aa).

Substrate is bound by residues 10–11 (DS) and 42–43 (YG). The active-site Proton donor/acceptor is cysteine 73. Residue 74-75 (NT) participates in substrate binding. Cysteine 183 acts as the Proton donor/acceptor in catalysis. Residue 184 to 185 (TH) participates in substrate binding.

Belongs to the aspartate/glutamate racemases family.

The catalysed reaction is L-glutamate = D-glutamate. It participates in cell wall biogenesis; peptidoglycan biosynthesis. Provides the (R)-glutamate required for cell wall biosynthesis. This chain is Glutamate racemase, found in Herpetosiphon aurantiacus (strain ATCC 23779 / DSM 785 / 114-95).